The following is a 409-amino-acid chain: NADH-quinone oxidoreductase subunit 4 (409 aa).

Belongs to the complex I 49 kDa subunit family. As to quaternary structure, NDH-1 is composed of 15 different subunits, Nqo1 to Nqo15. The complex has a L-shaped structure, with the hydrophobic arm (subunits Nqo7, Nqo8 and Nqo10 to Nqo14) embedded in the membrane and the hydrophilic peripheral arm (subunits Nqo1 to Nqo6, Nqo9 and Nqo15) protruding into the bacterial cytoplasm. The hydrophilic domain contains all the redox centers. This subunit interacts extensively with Nqo6.

It localises to the cell membrane. It carries out the reaction a quinone + NADH + 5 H(+)(in) = a quinol + NAD(+) + 4 H(+)(out). Functionally, NDH-1 shuttles electrons from NADH, via FMN and iron-sulfur (Fe-S) centers, to quinones in the respiratory chain. The immediate electron acceptor for the enzyme in this species is menaquinone. Couples the redox reaction to proton translocation (for every two electrons transferred, four hydrogen ions are translocated across the cytoplasmic membrane), and thus conserves the redox energy in a proton gradient required for the synthesis of ATP. The Nqo4 subunit may contain the quinone-binding site. This is NADH-quinone oxidoreductase subunit 4 (nqo4) from Thermus thermophilus (strain ATCC 27634 / DSM 579 / HB8).